We begin with the raw amino-acid sequence, 634 residues long: UPF0313 protein PG_0934 (634 aa).

The region spanning Ala-302–Lys-582 is the Radical SAM core domain. [4Fe-4S] cluster contacts are provided by Cys-316, Cys-320, and Cys-323. The interval Asp-607–Ser-634 is disordered. Positions Arg-625–Ser-634 are enriched in basic residues.

It belongs to the UPF0313 family. Requires [4Fe-4S] cluster as cofactor.

The sequence is that of UPF0313 protein PG_0934 from Porphyromonas gingivalis (strain ATCC BAA-308 / W83).